The sequence spans 576 residues: Arginine--tRNA ligase (576 aa).

The short motif at 122–132 (PNVAKEMHVGH) is the 'HIGH' region element.

This sequence belongs to the class-I aminoacyl-tRNA synthetase family. As to quaternary structure, monomer.

It localises to the cytoplasm. The enzyme catalyses tRNA(Arg) + L-arginine + ATP = L-arginyl-tRNA(Arg) + AMP + diphosphate. The protein is Arginine--tRNA ligase of Thermobifida fusca (strain YX).